The sequence spans 396 residues: Subtilisin-like protease 5 (396 aa).

The first 20 residues, 1–20 (MTGFFTILSFSLAALSVTNA), serve as a signal peptide directing secretion. Residues 21 to 116 (AQILSVPKGA…VEPDAIISQH (96 aa)) constitute a propeptide that is removed on maturation. Residues 37–113 (YIVVMKDDTS…VAFVEPDAII (77 aa)) form the Inhibitor I9 domain. The region spanning 125-396 (PWGLSRLSNR…SRLLYNGSGR (272 aa)) is the Peptidase S8 domain. Active-site charge relay system residues include D156 and H187. N-linked (GlcNAc...) asparagine glycans are attached at residues N230 and N248. The active-site Charge relay system is S342. Positions 376 to 389 (PTIRNPGPDTTSRL) are enriched in polar residues. Residues 376–396 (PTIRNPGPDTTSRLLYNGSGR) are disordered. The N-linked (GlcNAc...) asparagine glycan is linked to N392.

It belongs to the peptidase S8 family.

The protein localises to the secreted. Functionally, secreted subtilisin-like serine protease with keratinolytic activity that contributes to pathogenicity. The polypeptide is Subtilisin-like protease 5 (SUB5) (Arthroderma benhamiae (strain ATCC MYA-4681 / CBS 112371) (Trichophyton mentagrophytes)).